A 302-amino-acid chain; its full sequence is Fluoroacetate dehalogenase (302 aa).

The AB hydrolase-1 domain occupies 32 to 270 (PPLLLLHGFP…LDVWRKWASD (239 aa)). D110 (nucleophile) is an active-site residue. Residues R111, R114, H155, W156, and Y219 each contribute to the fluoroacetate site. The active-site Proton acceptor is H280.

The protein belongs to the AB hydrolase superfamily. Epoxide hydrolase family. In terms of assembly, homodimer.

The enzyme catalyses a haloacetate + H2O = a halide anion + glycolate + H(+). The catalysed reaction is fluoroacetate + H2O = fluoride + glycolate + H(+). It carries out the reaction chloroacetate + H2O = glycolate + chloride + H(+). Its function is as follows. Catalyzes the hydrolytic defluorination of fluoroacetate to produce glycolate. Has lower activity towards chloroacetate and bromoacetate. The chain is Fluoroacetate dehalogenase from Rhodopseudomonas palustris (strain ATCC BAA-98 / CGA009).